We begin with the raw amino-acid sequence, 504 residues long: Cytochrome P450 monooxygenase gsfF (504 aa).

The N-terminal stretch at 1 to 16 (MTVLFILSAGLVAVFG) is a signal peptide. Residues Asn97 and Asn150 are each glycosylated (N-linked (GlcNAc...) asparagine). Position 450 (Cys450) interacts with heme.

It belongs to the cytochrome P450 family. Requires heme as cofactor.

It carries out the reaction griseophenone B + reduced [NADPH--hemoprotein reductase] + O2 + H(+) = desmethyl-dehydrogriseofulvin + oxidized [NADPH--hemoprotein reductase] + 2 H2O. The protein operates within secondary metabolite biosynthesis; terpenoid biosynthesis. In terms of biological role, cytochrome P450 monooxygenase; part of the gene cluster that mediates the biosynthesis of griseofulvin, an important antifungal drug that has been in use for a long time for treating dermatophyte infections. The first step of the pathway is the formation of the heptaketide backbone by gsfA which is initiated by priming with acetyl-CoA, followed by sequential condensations of 6 malonyl-CoA units. The resulting benzophenone can undergo a spontaneous dehydration to form norlichexanthone. However, the true precursor for the griseofulvin biosynthesis is not norlichexanthone, but the heptaketide benzophenone that is O-methylated at 3-OH by gsfB to produce griseophenone D which is further methylated at 9-OH by gsfC to yield griseophenone C. Griseophenone C is then substrate of halogenase gsfI which is responsible for the regio-specific chlorination at the C13 position to form griseophenone B. The cytochrome P450 gsfF catalyzes the coupling of orcinol and phloroglucinol rings in griseophenone B to form desmethyl-dehydrogriseofulvin A which is further methylated at 5-OH by gsfD to yield dehydrogriseofulvin. Finally, gsfE performs stereospecific reduction of enone 18 of dehydrogriseofulvin to afford the final product griseofulvin. This Penicillium aethiopicum protein is Cytochrome P450 monooxygenase gsfF.